The primary structure comprises 108 residues: Sperm-egg fusion protein LLCFC1 (108 aa).

The N-terminal stretch at 1 to 30 (MTSLGSQLHRATFLTALLLLLLLQVKGVKT) is a signal peptide. Basic and acidic residues predominate over residues 39–49 (GDKSQKDKVSS). The disordered stretch occupies residues 39-64 (GDKSQKDKVSSEDQGEEEYEEHFEAS).

As to expression, detected in testicular germ cells and spermatozoa (at protein level). Abundantly expressed in testis.

It is found in the secreted. Its function is as follows. Sperm protein required for fusion of sperm with the egg membrane during fertilization. This Mus musculus (Mouse) protein is Sperm-egg fusion protein LLCFC1.